Here is a 191-residue protein sequence, read N- to C-terminus: Elongation factor P (191 aa).

The residue at position 34 (K34) is an N6-(3,6-diaminohexanoyl)-5-hydroxylysine.

Belongs to the elongation factor P family. In terms of processing, may be beta-lysylated on the epsilon-amino group of Lys-34 by the combined action of EpmA and EpmB, and then hydroxylated on the C5 position of the same residue by EpmC (if this protein is present). Lysylation is critical for the stimulatory effect of EF-P on peptide-bond formation. The lysylation moiety may extend toward the peptidyltransferase center and stabilize the terminal 3-CCA end of the tRNA. Hydroxylation of the C5 position on Lys-34 may allow additional potential stabilizing hydrogen-bond interactions with the P-tRNA.

Its subcellular location is the cytoplasm. The protein operates within protein biosynthesis; polypeptide chain elongation. Functionally, involved in peptide bond synthesis. Alleviates ribosome stalling that occurs when 3 or more consecutive Pro residues or the sequence PPG is present in a protein, possibly by augmenting the peptidyl transferase activity of the ribosome. Modification of Lys-34 is required for alleviation. The chain is Elongation factor P from Colwellia psychrerythraea (strain 34H / ATCC BAA-681) (Vibrio psychroerythus).